The primary structure comprises 490 residues: MKNYFNSLNFRQKLINLQKCKLIDNQFLSEKNNVLKGKNIVIVGCGSQGLNQGLNMRDSGLNISYALRDDSIFNKNQSWINATSNGFFVGTYENIIPTADLVINLTPDKQHEQVVNVLQKFMKPNSVLGFSHGFNIVEVGQLIRNDITVIMVAPKCPGTEVREEYKRGFGVPALIAVHSENDPHDIGFEIAKSWAISIGSHHAGILHSSFIAEVKSDLMGEQTILCGMLQASSLVCYNQLIFQGVNPSYAGKLIQTGWEVITESVKHGGITLMLDRLSNTAKIRAYFLSKKLKKIFFPLFRKHMDDIISGEFSKNMMFDWKNNDQQLKEWRTEIQNTDFEKCNIYYKQIPEQEYFDNGLLMVAILKAGIELSFEIMIETGIKEESAYYESLHELPLIANTIARKRLYEMNLVISDTAEYGSYLFSHAAIPLLKKFMNELQPGDLGNKISTSELDNITLYKVNAKIESHPIEIIGKKLRLYMTSMVPIKTK.

The 194-residue stretch at Ile15–Ser208 folds into the KARI N-terminal Rossmann domain. Residues Cys45–Gln48, Arg68, Ser78, and Asp108–Gln110 contribute to the NADP(+) site. The active site involves His132. Gly158 provides a ligand contact to NADP(+). KARI C-terminal knotted domains are found at residues Ser209–Ile344 and Tyr345–Met484. The Mg(2+) site is built by Asp217, Glu221, Glu389, and Glu393. Ser414 serves as a coordination point for substrate.

It belongs to the ketol-acid reductoisomerase family. It depends on Mg(2+) as a cofactor.

The enzyme catalyses (2R)-2,3-dihydroxy-3-methylbutanoate + NADP(+) = (2S)-2-acetolactate + NADPH + H(+). It carries out the reaction (2R,3R)-2,3-dihydroxy-3-methylpentanoate + NADP(+) = (S)-2-ethyl-2-hydroxy-3-oxobutanoate + NADPH + H(+). The protein operates within amino-acid biosynthesis; L-isoleucine biosynthesis; L-isoleucine from 2-oxobutanoate: step 2/4. Its pathway is amino-acid biosynthesis; L-valine biosynthesis; L-valine from pyruvate: step 2/4. Functionally, involved in the biosynthesis of branched-chain amino acids (BCAA). Catalyzes an alkyl-migration followed by a ketol-acid reduction of (S)-2-acetolactate (S2AL) to yield (R)-2,3-dihydroxy-isovalerate. In the isomerase reaction, S2AL is rearranged via a Mg-dependent methyl migration to produce 3-hydroxy-3-methyl-2-ketobutyrate (HMKB). In the reductase reaction, this 2-ketoacid undergoes a metal-dependent reduction by NADPH to yield (R)-2,3-dihydroxy-isovalerate. This chain is Ketol-acid reductoisomerase (NADP(+)), found in Buchnera aphidicola subsp. Melaphis rhois.